We begin with the raw amino-acid sequence, 295 residues long: Ethanolamine ammonia-lyase small subunit (295 aa).

The adenosylcob(III)alamin site is built by V209 and E230.

Belongs to the EutC family. As to quaternary structure, the basic unit is a heterodimer which dimerizes to form tetramers. The heterotetramers trimerize; 6 large subunits form a core ring with 6 small subunits projecting outwards. Adenosylcob(III)alamin is required as a cofactor.

The protein resides in the bacterial microcompartment. The enzyme catalyses ethanolamine = acetaldehyde + NH4(+). It functions in the pathway amine and polyamine degradation; ethanolamine degradation. Catalyzes the deamination of various vicinal amino-alcohols to oxo compounds. Allows this organism to utilize ethanolamine as the sole source of nitrogen and carbon in the presence of external vitamin B12. The polypeptide is Ethanolamine ammonia-lyase small subunit (Clostridium perfringens (strain ATCC 13124 / DSM 756 / JCM 1290 / NCIMB 6125 / NCTC 8237 / Type A)).